The following is a 266-amino-acid chain: Oxygen-evolving enhancer protein 2-3, chloroplastic (266 aa).

The N-terminal 80 residues, 1-80, are a transit peptide targeting the chloroplast; the sequence is MASTQCFLHH…VGSKVSPADA (80 aa).

It belongs to the PsbP family.

It is found in the plastid. Its subcellular location is the chloroplast thylakoid membrane. In terms of biological role, may be involved in the regulation of photosystem II. The protein is Oxygen-evolving enhancer protein 2-3, chloroplastic (PSBP3) of Nicotiana tabacum (Common tobacco).